The chain runs to 102 residues: Malonate decarboxylase acyl carrier protein (102 aa).

At Ser27 the chain carries O-(phosphoribosyl dephospho-coenzyme A)serine.

It belongs to the MdcC family. Post-translationally, covalently binds the prosthetic group of malonate decarboxylase.

Its subcellular location is the cytoplasm. Its function is as follows. Subunit of malonate decarboxylase, it is an acyl carrier protein to which acetyl and malonyl thioester residues are bound via a 2'-(5''-phosphoribosyl)-3'-dephospho-CoA prosthetic group and turn over during the catalytic mechanism. This is Malonate decarboxylase acyl carrier protein from Acinetobacter calcoaceticus.